The following is a 258-amino-acid chain: uncharacterized protein (258 aa).

A signal peptide spans 1 to 23 (MVWCHYILLVLTFFLFTTFFTAA). Residues 24-64 (CPAIFTWLNSLFRLSNDSPHVVHTSIAEVGDIEDGRVDKDG) lie on the Cytoplasmic side of the membrane. The helical transmembrane segment at 65–85 (VLFVDLEFFLGCLPFFFFALV) threads the bilayer. The Extracellular segment spans residues 86 to 123 (DQSSSSSVCKPLSPSDAKRSSNSLLRLSLVSSNDSDSS). The N-linked (GlcNAc...) asparagine glycan is linked to Asn118. The helical transmembrane segment at 124–144 (VSVSTFAFFFFFLFFLFFVFT) threads the bilayer. The Cytoplasmic portion of the chain corresponds to 145-230 (CTFSSELTSS…SSSISFRISS (86 aa)). The helical transmembrane segment at 231-251 (IFFLCSLVFMWFFNCFSDLNV) threads the bilayer. The Extracellular segment spans residues 252–258 (LLQIKHS).

It localises to the membrane. This is an uncharacterized protein from Saccharomyces cerevisiae (strain ATCC 204508 / S288c) (Baker's yeast).